Consider the following 1043-residue polypeptide: NACHT, LRR and PYD domains-containing protein 13 (1043 aa).

A Pyrin domain is found at 1–107 (MNFSVITCPN…CEKVRAEMKE (107 aa)). In terms of domain architecture, NACHT spans 229–558 (QTIVLVGRAG…VLEEPREFPP (330 aa)). An ATP-binding site is contributed by 235–242 (GRAGVGKT). LRR repeat units lie at residues 725–749 (NENL…LCLA), 781–804 (NSKL…ILKA), 837–864 (IQHV…ALTH), 894–917 (NRSL…FLCE), 923–946 (DGNL…ELAN), 951–978 (NHNV…ALKP), and 1007–1030 (SKSL…MLCK).

It belongs to the NLRP family.

In terms of biological role, involved in inflammation. This chain is NACHT, LRR and PYD domains-containing protein 13 (NLRP13), found in Homo sapiens (Human).